A 321-amino-acid chain; its full sequence is Cytochrome c biogenesis protein CcsA (321 aa).

The next 7 helical transmembrane spans lie at 17 to 37 (IISIVITIHLVTLLVHEIVGL), 43 to 63 (KGMIAAFFCITGLLVTRWIYS), 71 to 91 (LYESLMFLSWSFSIIHMVPKI), 143 to 163 (MLLSYAALLCGSLLSVALLVI), 225 to 245 (VISLGFTFLTIGILSGAVWAN), 258 to 273 (ETWAFITWTIFAIYLH), and 286 to 306 (AIVASMGFLIIWICYFGVNLL).

This sequence belongs to the CcmF/CycK/Ccl1/NrfE/CcsA family. May interact with Ccs1.

It is found in the plastid. Its subcellular location is the chloroplast thylakoid membrane. Required during biogenesis of c-type cytochromes (cytochrome c6 and cytochrome f) at the step of heme attachment. The chain is Cytochrome c biogenesis protein CcsA from Liriodendron tulipifera (Tuliptree).